We begin with the raw amino-acid sequence, 350 residues long: Zona pellucida-binding protein 1 (350 aa).

A signal peptide spans Met1–Gly44. N-linked (GlcNAc...) asparagine glycans are attached at residues Asn113, Asn186, and Asn339.

This sequence belongs to the zona pellucida-binding protein Sp38 family. Post-translationally, N-glycosylated. Expressed in testis (at protein level). Expressed in male germ cells.

The protein localises to the cytoplasmic vesicle. It localises to the secretory vesicle. It is found in the acrosome. The protein resides in the acrosome membrane. Its subcellular location is the secreted. Functionally, plays a role in acrosome compaction and sperm morphogenesis. Is implicated in sperm-oocyte interaction during fertilization. The chain is Zona pellucida-binding protein 1 (Zpbp) from Mus musculus (Mouse).